The chain runs to 137 residues: Putative transcriptional regulatory protein MJ0173 (137 aa).

The protein belongs to the Tfx family.

Functionally, putative transcriptional regulator. This chain is Putative transcriptional regulatory protein MJ0173, found in Methanocaldococcus jannaschii (strain ATCC 43067 / DSM 2661 / JAL-1 / JCM 10045 / NBRC 100440) (Methanococcus jannaschii).